Reading from the N-terminus, the 691-residue chain is MNDSNSLLITRLAAQILSRNMQTVDVIVDDKTLSLEEKIDTLTSMVLAVNSPPQSPPRVTSSDLAASIIKNNSKMVGNDFEMRYNVLRMAVVFVKHYPKYYNETTAGLVAEIESNLLQYQNYVNQGNYQNIEGYDSLLNKAEECYVKIDRLFKESIKKIMDDTEAFEREQEAERLRAEQTAANALLERRAQTSADDVVNRADANIPTAFSDPLPGPSAPRYMYESSESDTYMETARRTAEHYTDQDKDYNAAYTADEYNSLVKTVLLRLIEKALATLKNRLHITTIDQLKKFRDYLNSDADAGEFQIFLNQEDCVILKNLSNLASKFFNVRCVADTLEVMLEALRNNIELVQPESDAVRRIVIKMTQEIKDSSTPLYNIAMYKSDYDAIKNKNIKTLFDLYNDRLPINFLDTSATSPVRKTSGKRSAEDDLLPTRSSKRANRPEINVISSEDEQEDDDVEDVDYEKESKRRKLEDEDFLKLKALEFSKDIVNEKLQKIIVVTDGMKRLYEYCNCKNSLETLPSAANYGSLLKRLNLYNLDHIEMNVNFYELLFPLTLYNDNDNSDKTLSHQLVNYIFLASNYFQNCAKNFNYMRETFNVFGPFKQIDFMVMFVIKFNFLCDMRNFAKLIDELVPNKQPNMRIHSVLVMRDKIVKLAFSNLQFQTFSKKDKSRNTKHLQRLIMLMNANYNVI.

Positions 416–466 (SPVRKTSGKRSAEDDLLPTRSSKRANRPEINVISSEDEQEDDDVEDVDYEK) are disordered. Positions 450 to 464 (SEDEQEDDDVEDVDY) are enriched in acidic residues.

Homodimer. Interacts with host nuclear F-actin.

The protein resides in the host nucleus. The protein localises to the virion. Structural protein that plays a role in the packaging of nucleocapsids and in their egress from the nucleus toward the cell periphery. The chain is Capsid-associated protein VP80 (VP80) from Autographa californica nuclear polyhedrosis virus (AcMNPV).